A 325-amino-acid polypeptide reads, in one-letter code: Olfactory receptor 6Y1 (325 aa).

The Extracellular portion of the chain corresponds to Met1–Leu30. Asn10 carries N-linked (GlcNAc...) asparagine glycosylation. Residues Leu31–Ile51 traverse the membrane as a helical segment. Over Leu52–Gln59 the chain is Cytoplasmic. A helical transmembrane segment spans residues Leu60–Thr80. The Extracellular portion of the chain corresponds to Val81–Thr104. A disulfide bond links Cys102 and Cys194. A helical transmembrane segment spans residues Gln105–Phe125. Residues Asp126–Gln144 lie on the Cytoplasmic side of the membrane. A helical transmembrane segment spans residues Leu145 to Met165. Over Val166–Met202 the chain is Extracellular. An N-linked (GlcNAc...) asparagine glycan is attached at Asn191. The helical transmembrane segment at Val203–Ser222 threads the bilayer. The Cytoplasmic segment spans residues Tyr223 to Ala242. Residues Phe243 to Thr263 traverse the membrane as a helical segment. At Tyr264–Asn276 the chain is on the extracellular side. The chain crosses the membrane as a helical span at residues Lys277–Leu297. Over Arg298–Ser325 the chain is Cytoplasmic.

This sequence belongs to the G-protein coupled receptor 1 family.

It is found in the cell membrane. Its function is as follows. Odorant receptor. The sequence is that of Olfactory receptor 6Y1 (OR6Y1) from Homo sapiens (Human).